The following is a 219-amino-acid chain: Small ribosomal subunit protein uS3c (219 aa).

One can recognise a KH type-2 domain in the interval 39–111; sequence IRKFLMEKIK…NSFFNVKINF (73 aa).

The protein belongs to the universal ribosomal protein uS3 family. Part of the 30S ribosomal subunit.

It localises to the plastid. The protein is Small ribosomal subunit protein uS3c (rps3) of Euglena longa (Euglenophycean alga).